The following is a 433-amino-acid chain: tRNA-queuosine alpha-mannosyltransferase (433 aa).

The segment at 194-244 is disordered; sequence PAAKSHIQTSSPSSYPDVEPPEKMLNVAGTNQSHEPTSVTPHQETASPLCG. Residues 221–239 are compositionally biased toward polar residues; sequence AGTNQSHEPTSVTPHQETA.

It belongs to the glycosyltransferase group 1 family. Glycosyltransferase 4 subfamily.

The protein localises to the cytoplasm. It is found in the nucleus. It carries out the reaction queuosine(34) in tRNA(Asp) + GDP-alpha-D-mannose = O-4''-alpha-D-mannosylqueuosine(34) in tRNA(Asp) + GDP + H(+). Glycosyltransferase that specifically catalyzes mannosylation of cytoplasmic tRNA(Asp) modified with queuosine at position 34 (queuosine(34)). Mannosylates the cyclopentene moiety of queuosine(34) in tRNA(Asp) to form mannosyl-queuosine(34). Mannosylation of queuosine(34) in tRNA(Asp) is required to slow-down elongation at cognate codons, GAC and GAU, thereby regulating protein translation. This Danio rerio (Zebrafish) protein is tRNA-queuosine alpha-mannosyltransferase (gtdc1).